Here is a 53-residue protein sequence, read N- to C-terminus: Rubredoxin (53 aa).

In terms of domain architecture, Rubredoxin-like spans 1–53 (MQKYVCDICGYVYDPAVGDPDNGVAPGTAFADLPEDWVCPECGVSKDEFSPEA). Residues C6, C9, C39, and C42 each contribute to the Fe cation site.

Belongs to the rubredoxin family. The cofactor is Fe(3+).

Its function is as follows. Rubredoxin is a small nonheme, iron protein lacking acid-labile sulfide. Its single Fe, chelated to 4 Cys, functions as an electron acceptor and may also stabilize the conformation of the molecule. The chain is Rubredoxin from Butyribacterium methylotrophicum.